The sequence spans 401 residues: MDENNHGVSSSSLPPFLTKTYEMVDDSSSDSIVSWSQSNKSFIVWNPPEFSRDLLPRFFKHNNFSSFIRQLNTYGFRKADPEQWEFANDDFVRGQPHLMKNIHRRKPVHSHSLPNLQAQLNPLTDSERVRMNNQIERLTKEKEGLLEELHKQDEEREVFEMQVKELKERLQHMEKRQKTMVSFVSQVLEKPGLALNLSPCVPETNERKRRFPRIEFFPDEPMLEENKTCVVVREEGSTSPSSHTREHQVEQLESSIAIWENLVSDSCESMLQSRSMMTLDVDESSTFPESPPLSCIQLSVDSRLKSPPSPRIIDMNCEPDGSKEQNTVAAPPPPPVAGANDGFWQQFFSENPGSTEQREVQLERKDDKDKAGVRTEKCWWNSRNVNAITEQLGHLTSSERS.

Residues 13-107 (LPPFLTKTYE…LMKNIHRRKP (95 aa)) mediate DNA binding. The segment at 122–188 (PLTDSERVRM…TMVSFVSQVL (67 aa)) is hydrophobic repeat HR-A/B. The short motif at 207–213 (RKRRFPR) is the Nuclear localization signal element. Residues 256-265 (IAIWENLVSD) carry the AHA1 motif. Positions 341–350 (DGFWQQFFSE) match the AHA2 motif. A disordered region spans residues 351–373 (NPGSTEQREVQLERKDDKDKAGV). A compositionally biased stretch (basic and acidic residues) spans 356–373 (EQREVQLERKDDKDKAGV). The Nuclear export signal motif lies at 388–395 (ITEQLGHL).

It belongs to the HSF family. Class A subfamily. In terms of assembly, homotrimer. Post-translationally, exhibits temperature-dependent phosphorylation.

The protein localises to the cytoplasm. It localises to the nucleus. In terms of biological role, transcriptional activator that specifically binds DNA sequence 5'-AGAAnnTTCT-3' known as heat shock promoter elements (HSE). The chain is Heat stress transcription factor A-4a (HSFA4A) from Arabidopsis thaliana (Mouse-ear cress).